We begin with the raw amino-acid sequence, 476 residues long: Chromosomal replication initiator protein DnaA (476 aa).

Residues 1–73 (MTNSEQERWS…LSAWQAEMPE (73 aa)) are domain I, interacts with DnaA modulators. The interval 73–132 (EVHRIDLSVRTAMRCATPAKEAPAAVEARRPERSDAKPVSDARAPVMTPVAASHDALGGS) is domain II. The segment at 92 to 115 (KEAPAAVEARRPERSDAKPVSDAR) is disordered. Residues 99 to 112 (EARRPERSDAKPVS) show a composition bias toward basic and acidic residues. Residues 133-355 (PLDPRLTFAS…GAINRLLAHS (223 aa)) form a domain III, AAA+ region region. Residues G180, G182, K183, and T184 each coordinate ATP. Residues 356–476 (KLNNQPVTLD…VESLKRQLQD (121 aa)) form a domain IV, binds dsDNA region.

Belongs to the DnaA family. Oligomerizes as a right-handed, spiral filament on DNA at oriC.

The protein localises to the cytoplasm. In terms of biological role, plays an essential role in the initiation and regulation of chromosomal replication. ATP-DnaA binds to the origin of replication (oriC) to initiate formation of the DNA replication initiation complex once per cell cycle. Binds the DnaA box (a 9 base pair repeat at the origin) and separates the double-stranded (ds)DNA. Forms a right-handed helical filament on oriC DNA; dsDNA binds to the exterior of the filament while single-stranded (ss)DNA is stabiized in the filament's interior. The ATP-DnaA-oriC complex binds and stabilizes one strand of the AT-rich DNA unwinding element (DUE), permitting loading of DNA polymerase. After initiation quickly degrades to an ADP-DnaA complex that is not apt for DNA replication. Binds acidic phospholipids. This is Chromosomal replication initiator protein DnaA from Bradyrhizobium sp. (strain ORS 278).